A 227-amino-acid polypeptide reads, in one-letter code: Small ribosomal subunit protein uS7 (227 aa).

Acidic residues-rich tracts occupy residues methionine 1–aspartate 12 and asparagine 20–serine 31. Positions methionine 1 to alanine 43 are disordered. A compositionally biased stretch (low complexity) spans alanine 32–alanine 43.

This sequence belongs to the universal ribosomal protein uS7 family. Part of the 30S ribosomal subunit.

Functionally, one of the primary rRNA binding proteins, it binds directly to 16S rRNA where it nucleates assembly of the head domain of the 30S subunit. Is located at the subunit interface close to the decoding center. The sequence is that of Small ribosomal subunit protein uS7 from Haloquadratum walsbyi (strain DSM 16790 / HBSQ001).